The chain runs to 435 residues: Tyrosine-protein phosphatase non-receptor type 1 (435 aa).

An N-acetylmethionine modification is found at Met-1. Residues 3-277 enclose the Tyrosine-protein phosphatase domain; it reads MEKEFEQIDK…RFSYLAVIEG (275 aa). At Tyr-20 the chain carries Phosphotyrosine. A Phosphoserine; by PKB/AKT1, CLK1 and CLK2 modification is found at Ser-50. A Phosphotyrosine; by EGFR modification is found at Tyr-66. Substrate is bound by residues Asp-181 and 215 to 221; that span reads CSAGIGR. Residue Cys-215 is the Phosphocysteine intermediate of the active site. Cys-215 carries the post-translational modification Cysteine persulfide; alternate. Position 215 is a cysteine sulfenic acid (-SOH); alternate (Cys-215). Cysteine sulfinic acid (-SO2H); alternate is present on Cys-215. The residue at position 215 (Cys-215) is an S-nitrosocysteine; in reversibly inhibited form. Residues 215-216 constitute a cross-link (n,N-(cysteine-1,S-diyl)serine (Cys-Ser); in inhibited form); sequence CS. A phosphoserine; by CLK1 and CLK2 mark is found at Ser-242 and Ser-243. A substrate-binding site is contributed by Gln-262. The segment covering 338-351 has biased composition (basic and acidic residues); it reads TQEDKDCPIKEEKG. The disordered stretch occupies residues 338-359; that stretch reads TQEDKDCPIKEEKGSPLNAAPY. Residues Ser-352, Ser-363, and Ser-365 each carry the phosphoserine modification. Residue Thr-368 is modified to Phosphothreonine. Ser-378 bears the Phosphoserine; by PKC mark. Residues 378-398 form a disordered region; it reads SLRGAQAASPAKGEPSLPEKD. Phosphoserine; by CDK1 is present on Ser-386.

The protein belongs to the protein-tyrosine phosphatase family. Non-receptor class 1 subfamily. Interacts with EPHA3 (phosphorylated); dephosphorylates EPHA3 and may regulate its trafficking and function. Interacts with MET. Interacts with NCK1. Oxidized on Cys-215; the Cys-SOH formed in response to redox signaling reacts with the alpha-amido of the following residue to form a sulfenamide cross-link, triggering a conformational change that inhibits substrate binding and activity. The active site can be restored by reduction. Post-translationally, ser-50 is the major site of phosphorylation as compared to Ser-242 and Ser-243. Activated by phosphorylation at Ser-50. In terms of processing, S-nitrosylation of Cys-215 inactivates the enzyme activity. Sulfhydration at Cys-215 following endoplasmic reticulum stress inactivates the enzyme activity, promoting EIF2AK3/PERK activity. In terms of tissue distribution, expressed in keratinocytes (at protein level).

Its subcellular location is the endoplasmic reticulum membrane. It catalyses the reaction O-phospho-L-tyrosyl-[protein] + H2O = L-tyrosyl-[protein] + phosphate. In terms of biological role, tyrosine-protein phosphatase which acts as a regulator of endoplasmic reticulum unfolded protein response. Mediates dephosphorylation of EIF2AK3/PERK; inactivating the protein kinase activity of EIF2AK3/PERK. May play an important role in CKII- and p60c-src-induced signal transduction cascades. May regulate the EFNA5-EPHA3 signaling pathway which modulates cell reorganization and cell-cell repulsion. May also regulate the hepatocyte growth factor receptor signaling pathway through dephosphorylation of MET. The protein is Tyrosine-protein phosphatase non-receptor type 1 (PTPN1) of Homo sapiens (Human).